Reading from the N-terminus, the 37-residue chain is U12-myrmicitoxin-Mri1a (37 aa).

A signal peptide spans 1-23; that stretch reads MKTIELITIFAMITTLMVTVVAG. Residues 24-25 constitute a propeptide that is removed on maturation; it reads DP. Valine amide is present on Val-35.

In terms of tissue distribution, expressed by the venom gland.

It localises to the secreted. In terms of biological role, toxin that induces mild paralysis, and reduces survival and reproduction when injected into aphids (A.pisum). May affect various processes in the aphid, including wound healing and hemolymph coagulation. It does not increase the sensitivity of the aphids to the chemical insecticides imidacloprid, methomyl and Spirotetramat. Has no insecticidal activity when injected into blowfly (L.caesar). Does not display any antibacterial or antifungal activity. The polypeptide is U12-myrmicitoxin-Mri1a (Manica rubida (European giant red ant)).